Reading from the N-terminus, the 364-residue chain is MPLDCTDYREIFLNDRPMMDTRAPIEFTKGAFPGVLNLPLMTDQERQRVGTCYKQQGQQAAIVLGHQLVSGAIKEQRIQAWADFARAHPDGLLYCFRGGLRSQIVQQWLREAGIDYPRVGGGYKAMRTFLLDTTEQALQQCDFVLLGGMTGTGKTQVLGQLDNALDLEGHANHRGSSFGRRATGQPSNIDFENRLAVDLLKKRERGVQSFVLEDENRMIGSCALPLPLYQSMQGLPMVWLEDSLANRVQRILDDYVVNLCAEFVAVHGEQGFALFAERLLESLNKIHKRLGGERHQRLFLLMEAALAEQARSGDVERHRAWIEGLLGEYYDPMYAFQRESKGARIEFSGEHGAVLDYLRQRSPR.

In terms of domain architecture, Rhodanese spans 12 to 135 (FLNDRPMMDT…MRTFLLDTTE (124 aa)). Catalysis depends on Cys-95, which acts as the S-selanylcysteine intermediate.

The protein belongs to the SelU family. In terms of assembly, monomer.

It carries out the reaction 5-methylaminomethyl-2-thiouridine(34) in tRNA + selenophosphate + (2E)-geranyl diphosphate + H2O + H(+) = 5-methylaminomethyl-2-selenouridine(34) in tRNA + (2E)-thiogeraniol + phosphate + diphosphate. It catalyses the reaction 5-methylaminomethyl-2-thiouridine(34) in tRNA + (2E)-geranyl diphosphate = 5-methylaminomethyl-S-(2E)-geranyl-thiouridine(34) in tRNA + diphosphate. The catalysed reaction is 5-methylaminomethyl-S-(2E)-geranyl-thiouridine(34) in tRNA + selenophosphate + H(+) = 5-methylaminomethyl-2-(Se-phospho)selenouridine(34) in tRNA + (2E)-thiogeraniol. The enzyme catalyses 5-methylaminomethyl-2-(Se-phospho)selenouridine(34) in tRNA + H2O = 5-methylaminomethyl-2-selenouridine(34) in tRNA + phosphate. Functionally, involved in the post-transcriptional modification of the uridine at the wobble position (U34) of tRNA(Lys), tRNA(Glu) and tRNA(Gln). Catalyzes the conversion of 2-thiouridine (S2U-RNA) to 2-selenouridine (Se2U-RNA). Acts in a two-step process involving geranylation of 2-thiouridine (S2U) to S-geranyl-2-thiouridine (geS2U) and subsequent selenation of the latter derivative to 2-selenouridine (Se2U) in the tRNA chain. The protein is tRNA 2-selenouridine synthase of Pseudomonas fluorescens (strain ATCC BAA-477 / NRRL B-23932 / Pf-5).